We begin with the raw amino-acid sequence, 226 residues long: 7-cyano-7-deazaguanine synthase (226 aa).

7-17 (ISGGMDSLVTT) serves as a coordination point for ATP. Residues Cys-187, Cys-195, Cys-198, and Cys-201 each coordinate Zn(2+).

The protein belongs to the QueC family. Zn(2+) serves as cofactor.

The catalysed reaction is 7-carboxy-7-deazaguanine + NH4(+) + ATP = 7-cyano-7-deazaguanine + ADP + phosphate + H2O + H(+). The protein operates within purine metabolism; 7-cyano-7-deazaguanine biosynthesis. Catalyzes the ATP-dependent conversion of 7-carboxy-7-deazaguanine (CDG) to 7-cyano-7-deazaguanine (preQ(0)). The sequence is that of 7-cyano-7-deazaguanine synthase from Chlorobium limicola (strain DSM 245 / NBRC 103803 / 6330).